The sequence spans 314 residues: Protoheme IX farnesyltransferase (314 aa).

The next 7 membrane-spanning stretches (helical) occupy residues 58–78, 107–127, 130–150, 173–193, 227–247, 248–268, and 294–314; these read LWLVVATVVGGAFSAGSASVF, AALVFGFVLGILSTVILYVWV, LSAALSVAANAFYVLVYTMLL, WTAVTGSLSWVPVVLFAVVFF, VGRQVVIYSWVMVATSLLLWP, VAGTGIFYPIAAGVLGAVFLL, and SSNLYLSLLFVAVALDPLLAG.

It belongs to the UbiA prenyltransferase family. Protoheme IX farnesyltransferase subfamily.

Its subcellular location is the cell membrane. It carries out the reaction heme b + (2E,6E)-farnesyl diphosphate + H2O = Fe(II)-heme o + diphosphate. It participates in porphyrin-containing compound metabolism; heme O biosynthesis; heme O from protoheme: step 1/1. In terms of biological role, converts heme B (protoheme IX) to heme O by substitution of the vinyl group on carbon 2 of heme B porphyrin ring with a hydroxyethyl farnesyl side group. This Nocardioides sp. (strain ATCC BAA-499 / JS614) protein is Protoheme IX farnesyltransferase.